Consider the following 107-residue polypeptide: Glutaredoxin-1 (107 aa).

Alanine 2 bears the N-acetylalanine mark. Residues 3–106 form the Glutaredoxin domain; that stretch reads QEFVNCKIQS…ARLKQIGALQ (104 aa). At lysine 9 the chain carries N6-succinyllysine. Intrachain disulfides connect cysteine 23–cysteine 26 and cysteine 79–cysteine 83.

This sequence belongs to the glutaredoxin family.

Its subcellular location is the cytoplasm. Has a glutathione-disulfide oxidoreductase activity in the presence of NADPH and glutathione reductase. Reduces low molecular weight disulfides and proteins. In Rattus norvegicus (Rat), this protein is Glutaredoxin-1 (Glrx).